The sequence spans 678 residues: Portal protein (678 aa).

The interval 376-405 is disordered; the sequence is PAVDHTLPGFGKGGTGRGSRPQDPGARPQQ. Residues 422-443 form a putative leucine zipper motif region; it reads LEGYINNLFGTIERLRETNAGL. Residues 459-470 are compositionally biased toward basic and acidic residues; that stretch reads AGALEREQRAAD. Disordered stretches follow at residues 459 to 480 and 622 to 678; these read AGAL…AGRP and PRPP…HARR. Positions 642-652 are enriched in basic residues; that stretch reads SRSRTRTRSRS. The span at 667–678 shows a compositional bias: basic and acidic residues; it reads VERRDGRPHARR.

This sequence belongs to the herpesviridae portal protein family. Homododecamerizes. Interacts with terminase subunits TRM1 and TRM3.

It localises to the virion. Its subcellular location is the host nucleus. In terms of biological role, forms a portal in the viral capsid through which viral DNA is translocated during DNA packaging. Assembles as a dodecamer at a single fivefold axe of the T=16 icosahedric capsid. Binds to the molecular motor that translocates the viral DNA, termed terminase. The polypeptide is Portal protein (UL6) (Homo sapiens (Human)).